The following is a 304-amino-acid chain: Deoxyribonuclease-1-like 1 (304 aa).

An N-terminal signal peptide occupies residues 1–24 (MPYMAMHGLTVALLLIFLAGGTEA). An N-linked (GlcNAc...) asparagine glycan is attached at N92. The active site involves E103. The N-linked (GlcNAc...) asparagine glycan is linked to N123. H154 is an active-site residue. C193 and C230 form a disulfide bridge. An N-linked (GlcNAc...) asparagine glycan is attached at N229.

This sequence belongs to the DNase I family.

The protein localises to the endoplasmic reticulum. This chain is Deoxyribonuclease-1-like 1 (DNASE1L1), found in Cricetulus griseus (Chinese hamster).